The primary structure comprises 244 residues: Transforming protein v-Fos/v-Fox (244 aa).

Positions 1–236 are transforming protein v-Fos; it reads DSLSYYHSPA…LFPASSGHSG (236 aa). Residues 113-176 enclose the bZIP domain; that stretch reads EVKRRIRRER…EKLEFILAAH (64 aa). The interval 115-135 is basic motif; it reads KRRIRRERNKMAAAKCRNRRR. Positions 141-169 are leucine-zipper; that stretch reads LQAETDQLEDEKSALQTEIANLLKEKEKL. The segment at 237–244 is transforming protein v-Fox; the sequence is FISMAGWQ.

It belongs to the bZIP family. Fos subfamily.

Its subcellular location is the host nucleus. In Mus musculus (Mouse), this protein is Transforming protein v-Fos/v-Fox (FOS-FOX).